The chain runs to 758 residues: Microtubule-associated protein tau (758 aa).

Over residues 1–26 (MAEPHQEFDVTEDHAGTYGLGDRKDQ) the composition is skewed to basic and acidic residues. Residues 1-573 (MAEPHQEFDV…PVPMPDLKNV (573 aa)) are disordered. Alanine 2 carries the post-translational modification N-acetylalanine. 2 positions are modified to phosphotyrosine: tyrosine 18 and tyrosine 29. A Glycyl lysine isopeptide (Lys-Gly) (interchain with G-Cter in ubiquitin) cross-link involves residue lysine 44. Serine 46 and serine 61 each carry phosphoserine. Residues 61–71 (SETSDAKSTPT) show a composition bias toward polar residues. 3 positions are modified to phosphothreonine: threonine 69, threonine 71, and threonine 111. Composition is skewed to basic and acidic residues over residues 179–189 (EGGRHAPELLK) and 207–216 (GGKERPGSKE). Serine 214 bears the Phosphoserine mark. The segment covering 217 to 228 (EVDEDRDVDESS) has biased composition (acidic residues). A compositionally biased stretch (basic and acidic residues) spans 314-323 (EQAHSEEHLR). Residues 325–340 (AAFPGAPGEGPEAQGP) are compositionally biased toward low complexity. 2 stretches are compositionally biased toward basic and acidic residues: residues 344 to 356 (EDAK…EPSE) and 381 to 393 (KSKD…DKKA). The span at 440–452 (KYVSSVTPRTGSS) shows a compositional bias: polar residues. Over residues 455–466 (KEMKLKGADGKT) the composition is skewed to basic and acidic residues. Threonine 470 is subject to Phosphothreonine. Arginine 472 carries the omega-N-methylarginine modification. Lysine 480 is subject to N6,N6-dimethyllysine; alternate. At lysine 480 the chain carries N6-acetyllysine; alternate. Phosphothreonine occurs at positions 486, 492, and 498. The segment covering 491 to 503 (KTPPAPKTPPSSG) has biased composition (pro residues). Phosphoserine occurs at positions 502, 508, and 512. The segment covering 504–531 (EPPKSGDRSGYSSPGSPGTPGSRSRTPS) has biased composition (low complexity). At tyrosine 514 the chain carries Phosphotyrosine. A phosphoserine mark is found at serine 515, serine 516, and serine 519. Threonine 522 and threonine 529 each carry phosphothreonine. At serine 531 the chain carries Phosphoserine. Threonine 534 carries the post-translational modification Phosphothreonine. At lysine 542 the chain carries N6-acetyllysine. Residue threonine 548 is modified to Phosphothreonine. Phosphoserine is present on residues serine 552 and serine 554. Tau/MAP repeat units lie at residues 561–591 (QTAP…GGGK), 592–622 (VQII…GGGS), 623–653 (VQIV…GGGQ), and 654–685 (VEVK…GGGH). Lysine 571 is covalently cross-linked (Glycyl lysine isopeptide (Lys-Gly) (interchain with G-Cter in ubiquitin)). Lysine 576 bears the N6-acetyllysine; alternate mark. Position 576 is an N6-methyllysine; alternate (lysine 576). A Glycyl lysine isopeptide (Lys-Gly) (interchain with G-Cter in ubiquitin); alternate cross-link involves residue lysine 576. Phosphoserine is present on serine 579. Lysine 584 participates in a covalent cross-link: Glycyl lysine isopeptide (Lys-Gly) (interchain with G-Cter in ubiquitin). Position 598 is an N6-acetyllysine; alternate (lysine 598). A Glycyl lysine isopeptide (Lys-Gly) (interchain with G-Cter in ubiquitin); alternate cross-link involves residue lysine 598. A phosphoserine mark is found at serine 602 and serine 606. Lysine 607 is modified (N6-acetyllysine). Serine 610 carries the post-translational modification Phosphoserine. Lysine 615 is modified (N6-acetyllysine; alternate). Lysine 615 is covalently cross-linked (Glycyl lysine isopeptide (Lys-Gly) (interchain with G-Cter in ubiquitin); alternate). A Phosphoserine modification is found at serine 622. An N6,N6-dimethyllysine; alternate modification is found at lysine 628. N6-acetyllysine; alternate occurs at positions 628, 634, and 638. Glycyl lysine isopeptide (Lys-Gly) (interchain with G-Cter in ubiquitin); alternate cross-links involve residues lysine 628, lysine 634, and lysine 638. Serine 641 is subject to Phosphoserine. 3 positions are modified to N6-acetyllysine; alternate: lysine 648, lysine 660, and lysine 664. Residues lysine 648, lysine 660, and lysine 664 each participate in a glycyl lysine isopeptide (Lys-Gly) (interchain with G-Cter in ubiquitin); alternate cross-link. Omega-N-methylarginine is present on arginine 666. Serine 669 carries the post-translational modification Phosphoserine. Lysine 670 is covalently cross-linked (Glycyl lysine isopeptide (Lys-Gly) (interchain with G-Cter in ubiquitin)). Serine 673 is subject to Phosphoserine. Lysine 686 carries the N6-acetyllysine; alternate modification. Lysine 686 participates in a covalent cross-link: Glycyl lysine isopeptide (Lys-Gly) (interchain with G-Cter in ubiquitin); alternate. Lysine 692 participates in a covalent cross-link: Glycyl lysine isopeptide (Lys-Gly) (interchain with G-Cter in ubiquitin). An N6-acetyllysine; alternate modification is found at lysine 702. A Glycyl lysine isopeptide (Lys-Gly) (interchain with G-Cter in ubiquitin); alternate cross-link involves residue lysine 702. Residue tyrosine 711 is modified to Phosphotyrosine. A phosphoserine mark is found at serine 713 and serine 717. The interval 715–734 (VVSGDTSPRHLSNVSSTGSI) is disordered. Residues 718–733 (GDTSPRHLSNVSSTGS) are compositionally biased toward polar residues. At threonine 720 the chain carries Phosphothreonine. Serine 721, serine 726, serine 733, and serine 739 each carry phosphoserine. Threonine 744 bears the Phosphothreonine mark.

Interacts with MARK1, MARK2, MARK3 and MARK4. Interacts with SQSTM1 when polyubiquitinated. Interacts with PSMC2 through SQSTM1. Interacts with FKBP4. Binds to CSNK1D. Interacts with SGK1. Interacts with EPM2A; the interaction dephosphorylates MAPT at Ser-396. Interacts with PIN1. Interacts with LRRK2. Interacts with LRP1, leading to endocytosis; this interaction is reduced in the presence of LRPAP1/RAP. Post-translationally, polyubiquitinated. Requires functional TRAF6 and may provoke SQSTM1-dependent degradation by the proteasome. Phosphorylation at various serine and threonine residues in S-P or T-P motifs by proline-directed protein kinases (PDPK1, CDK1, CDK5, GSK3, MAPK) (a few sites per protein in interphase, more in mitosis), and at serine residues in K-X-G-S motifs by MAP/microtubule affinity-regulating kinase (MARK1, MARK2, MARK3 or MARK4), causing detachment from microtubules, and their disassembly. Phosphorylation at Ser-579 by BRSK1 and BRSK2 in neurons affects ability to bind microtubules and plays a role in neuron polarization. Phosphorylated by PHK. Dephosphorylation at several serine and threonine residues by the serine/threonine phosphatase PPP5C. Phosphorylation at Ser-214 by SGK1 mediates microtubule depolymerization and neurite formation in hippocampal neurons.

Its subcellular location is the cytoplasm. It localises to the cytosol. It is found in the cell membrane. The protein resides in the cytoskeleton. The protein localises to the cell projection. Its subcellular location is the axon. It localises to the dendrite. Its function is as follows. Promotes microtubule assembly and stability, and might be involved in the establishment and maintenance of neuronal polarity. The C-terminus binds axonal microtubules while the N-terminus binds neural plasma membrane components, suggesting that tau functions as a linker protein between both. Axonal polarity is predetermined by tau localization (in the neuronal cell) in the domain of the cell body defined by the centrosome. The short isoforms allow plasticity of the cytoskeleton whereas the longer isoforms may preferentially play a role in its stabilization. This is Microtubule-associated protein tau (MAPT) from Pongo pygmaeus (Bornean orangutan).